The following is a 443-amino-acid chain: ATP-dependent protease ATPase subunit HslU (443 aa).

Residues Ile18 and 60-65 (GVGKTE) each bind ATP. The disordered stretch occupies residues 142–162 (LGFEASPSEESNATRQKFRKK). ATP-binding residues include Asp256, Glu321, and Arg393.

It belongs to the ClpX chaperone family. HslU subfamily. As to quaternary structure, a double ring-shaped homohexamer of HslV is capped on each side by a ring-shaped HslU homohexamer. The assembly of the HslU/HslV complex is dependent on binding of ATP.

The protein resides in the cytoplasm. ATPase subunit of a proteasome-like degradation complex; this subunit has chaperone activity. The binding of ATP and its subsequent hydrolysis by HslU are essential for unfolding of protein substrates subsequently hydrolyzed by HslV. HslU recognizes the N-terminal part of its protein substrates and unfolds these before they are guided to HslV for hydrolysis. In Nitrosomonas europaea (strain ATCC 19718 / CIP 103999 / KCTC 2705 / NBRC 14298), this protein is ATP-dependent protease ATPase subunit HslU.